The chain runs to 242 residues: Ribonuclease PH (242 aa).

Phosphate-binding positions include arginine 89 and 127–129 (GTR).

It belongs to the RNase PH family. Homohexameric ring arranged as a trimer of dimers.

The enzyme catalyses tRNA(n+1) + phosphate = tRNA(n) + a ribonucleoside 5'-diphosphate. In terms of biological role, phosphorolytic 3'-5' exoribonuclease that plays an important role in tRNA 3'-end maturation. Removes nucleotide residues following the 3'-CCA terminus of tRNAs; can also add nucleotides to the ends of RNA molecules by using nucleoside diphosphates as substrates, but this may not be physiologically important. Probably plays a role in initiation of 16S rRNA degradation (leading to ribosome degradation) during starvation. This Neisseria meningitidis serogroup A / serotype 4A (strain DSM 15465 / Z2491) protein is Ribonuclease PH.